Reading from the N-terminus, the 184-residue chain is ADP-ribosylation factor-like protein 2 (184 aa).

G2 carries the N-myristoyl glycine lipid modification. Residue 23 to 30 (GLDNAGKT) participates in GTP binding. S45 bears the Phosphoserine mark. GTP contacts are provided by residues 66 to 70 (DVGGQ) and G68. Residue K71 forms a Glycyl lysine isopeptide (Lys-Gly) (interchain with G-Cter in ubiquitin) linkage. Position 125 to 128 (125 to 128 (NKQD)) interacts with GTP.

Belongs to the small GTPase superfamily. Arf family. As to quaternary structure, interacts with ELMOD2. Interacts with ARL2BP; the GTP-bound form interacts with ARL2BP. The GDP-bound form interacts preferentially with TBCD. Interacts with UNC119. Found in a complex with ARL2, ARL2BP and SLC25A4. The GTP-bound form interacts with PDE6D. Found in a complex with ARL2, ARL2BP and SLC25A6. Found in a complex with at least ARL2, PPP2CB, PPP2R1A, PPP2R2A, PPP2R5E and TBCD. In terms of processing, not N-myristoylated. Expressed in liver and retina (at protein level).

It localises to the nucleus. The protein resides in the mitochondrion intermembrane space. It is found in the cytoplasm. Its subcellular location is the cytoskeleton. The protein localises to the microtubule organizing center. It localises to the centrosome. The protein resides in the mitochondrion. In terms of biological role, small GTP-binding protein which cycles between an inactive GDP-bound and an active GTP-bound form, and the rate of cycling is regulated by guanine nucleotide exchange factors (GEF) and GTPase-activating proteins (GAP). GTP-binding protein that does not act as an allosteric activator of the cholera toxin catalytic subunit. Regulates formation of new microtubules and centrosome integrity. Prevents the TBCD-induced microtubule destruction. Participates in association with TBCD, in the disassembly of the apical junction complexes. Antagonizes the effect of TBCD on epithelial cell detachment and tight and adherens junctions disassembly. Together with ARL2, plays a role in the nuclear translocation, retention and transcriptional activity of STAT3. Component of a regulated secretory pathway involved in Ca(2+)-dependent release of acetylcholine. Required for normal progress through the cell cycle. In Bos taurus (Bovine), this protein is ADP-ribosylation factor-like protein 2 (ARL2).